A 665-amino-acid chain; its full sequence is tRNA 5-methylaminomethyl-2-thiouridine biosynthesis bifunctional protein MnmC (665 aa).

The tRNA (mnm(5)s(2)U34)-methyltransferase stretch occupies residues methionine 1–alanine 243. An FAD-dependent cmnm(5)s(2)U34 oxidoreductase region spans residues isoleucine 268–glutamine 665.

It in the N-terminal section; belongs to the methyltransferase superfamily. tRNA (mnm(5)s(2)U34)-methyltransferase family. In the C-terminal section; belongs to the DAO family. Requires FAD as cofactor.

It is found in the cytoplasm. It catalyses the reaction 5-aminomethyl-2-thiouridine(34) in tRNA + S-adenosyl-L-methionine = 5-methylaminomethyl-2-thiouridine(34) in tRNA + S-adenosyl-L-homocysteine + H(+). Its function is as follows. Catalyzes the last two steps in the biosynthesis of 5-methylaminomethyl-2-thiouridine (mnm(5)s(2)U) at the wobble position (U34) in tRNA. Catalyzes the FAD-dependent demodification of cmnm(5)s(2)U34 to nm(5)s(2)U34, followed by the transfer of a methyl group from S-adenosyl-L-methionine to nm(5)s(2)U34, to form mnm(5)s(2)U34. This Aeromonas hydrophila subsp. hydrophila (strain ATCC 7966 / DSM 30187 / BCRC 13018 / CCUG 14551 / JCM 1027 / KCTC 2358 / NCIMB 9240 / NCTC 8049) protein is tRNA 5-methylaminomethyl-2-thiouridine biosynthesis bifunctional protein MnmC.